A 184-amino-acid chain; its full sequence is Putative DNA-directed RNA polymerase subunit 454R (184 aa).

This sequence belongs to the archaeal Rpo5/eukaryotic RPB5 RNA polymerase subunit family.

Component of the DNA-dependent RNA polymerase that catalyzes the transcription in the cytoplasm of viral DNA into RNA using the four ribonucleoside triphosphates as substrates. This Invertebrate iridescent virus 6 (IIV-6) protein is Putative DNA-directed RNA polymerase subunit 454R.